An 89-amino-acid chain; its full sequence is Co-chaperonin GroES (89 aa).

The protein belongs to the GroES chaperonin family. In terms of assembly, heptamer of 7 subunits arranged in a ring. Interacts with the chaperonin GroEL.

The protein resides in the cytoplasm. Its function is as follows. Together with the chaperonin GroEL, plays an essential role in assisting protein folding. The GroEL-GroES system forms a nano-cage that allows encapsulation of the non-native substrate proteins and provides a physical environment optimized to promote and accelerate protein folding. GroES binds to the apical surface of the GroEL ring, thereby capping the opening of the GroEL channel. This chain is Co-chaperonin GroES, found in Kosmotoga olearia (strain ATCC BAA-1733 / DSM 21960 / TBF 19.5.1).